The primary structure comprises 340 residues: Diacylglycerol acyltransferase/mycolyltransferase Ag85C (340 aa).

Positions 1 to 45 (MTFFEQVRRLRSAATTLPRRLAIAAMGAVLVYGLVGTFGGPATAG) are cleaved as a signal peptide. A substrate-binding site is contributed by 86 to 87 (LR). Residues 102–112 (FEEYYQSGLSV) form a fibronectin-binding region. Substrate contacts are provided by S170 and N198. S170 functions as the Nucleophile in the catalytic mechanism. The active site involves E274. Substrate contacts are provided by residues 276-279 (LTLR) and 306-308 (HSW). H306 is an active-site residue.

This sequence belongs to the mycobacterial A85 antigen family. In terms of assembly, homodimer.

Its subcellular location is the secreted. It carries out the reaction an acyl-CoA + a 1,2-diacyl-sn-glycerol = a triacyl-sn-glycerol + CoA. The catalysed reaction is 2 alpha,alpha'-trehalose 6-mycolate = alpha,alpha'-trehalose 6,6'-bismycolate + alpha,alpha-trehalose. Functionally, the antigen 85 proteins (FbpA, FbpB, FbpC) are responsible for the high affinity of mycobacteria to fibronectin, a large adhesive glycoprotein, which facilitates the attachment of M.tuberculosis to murine alveolar macrophages (AMs). They also help to maintain the integrity of the cell wall by catalyzing the transfer of mycolic acids to cell wall arabinogalactan and through the synthesis of alpha,alpha-trehalose dimycolate (TDM, cord factor). They catalyze the transfer of a mycoloyl residue from one molecule of alpha,alpha-trehalose monomycolate (TMM) to another TMM, leading to the formation of TDM. This Mycobacterium bovis (strain ATCC BAA-935 / AF2122/97) protein is Diacylglycerol acyltransferase/mycolyltransferase Ag85C (fbpC).